We begin with the raw amino-acid sequence, 146 residues long: Probable glycine cleavage system H protein 3 (146 aa).

In terms of domain architecture, Lipoyl-binding spans 29-111 (VVSVGMTDLG…PYGSWIIKVS (83 aa)). K71 carries the post-translational modification N6-lipoyllysine.

Belongs to the GcvH family. In terms of assembly, the glycine cleavage system is composed of four proteins: P, T, L and H. Requires (R)-lipoate as cofactor.

The glycine cleavage system catalyzes the degradation of glycine. The H protein shuttles the methylamine group of glycine from the P protein to the T protein. This is Probable glycine cleavage system H protein 3 from Sulfolobus acidocaldarius (strain ATCC 33909 / DSM 639 / JCM 8929 / NBRC 15157 / NCIMB 11770).